Reading from the N-terminus, the 116-residue chain is Large ribosomal subunit protein bL19 (116 aa).

This sequence belongs to the bacterial ribosomal protein bL19 family.

Its function is as follows. This protein is located at the 30S-50S ribosomal subunit interface and may play a role in the structure and function of the aminoacyl-tRNA binding site. The protein is Large ribosomal subunit protein bL19 of Actinobacillus pleuropneumoniae serotype 5b (strain L20).